The following is a 409-amino-acid chain: Astacin-like metalloendopeptidase (409 aa).

Residues 1–19 form the signal peptide; that stretch reads MDLKMLLIFIAFLLPSVLG. The span at 30-39 shows a compositional bias: low complexity; the sequence is TATTESTQVT. The disordered stretch occupies residues 30-54; it reads TATTESTQVTTEEDIYDSPSPAETD. Residues 87-285 enclose the Peptidase M12A domain; the sequence is SAINCRNCYW…AKINRLYNCS (199 aa). Intrachain disulfides connect Cys91-Cys94, Cys134-Cys284, Cys155-Cys175, Cys287-Cys313, and Cys339-Cys362. His183 serves as a coordination point for Zn(2+). Glu184 is a catalytic residue. Zn(2+)-binding residues include His187 and His193. Positions 287–399 constitute a CUB domain; the sequence is CSTIIDAAFG…SGFQATFTSA (113 aa).

Zn(2+) is required as a cofactor. In terms of tissue distribution, expressed in ovary and gonads.

It is found in the cytoplasm. The protein localises to the cell membrane. Its subcellular location is the cytoplasmic vesicle. The protein resides in the secretory vesicle. It localises to the cortical granule. Functionally, probable oocyte-specific oolemmal receptor involved in sperm and egg adhesion and fertilization. May act as a protease. The sequence is that of Astacin-like metalloendopeptidase (ASTL) from Gallus gallus (Chicken).